The chain runs to 1856 residues: Zinc metalloprotease ZmpC (1856 aa).

A signal peptide spans 1–42 (MSRKSIGEKRHSFSMRKLSVGLVSVTVSSFFLMSQGIQSVSA). Residues 43 to 95 (DNMESPIHYKYMTEGKLTDEEKSLLVEALPQLAEESDDTYYLVYRSQQFLPNT) constitute a propeptide that is removed on maturation. Positions 92–96 (LPNTG) match the LPXTG sorting signal motif. Thr95 carries the pentaglycyl murein peptidoglycan amidated threonine modification. The next 2 helical transmembrane spans lie at 97–117 (FNPT…VLLV) and 130–152 (FLLL…TSQI). The Extracellular segment spans residues 153 to 1856 (LSAYNSQLSI…TDDFRNSIYK (1704 aa)). 2 stretches are compositionally biased toward polar residues: residues 254-267 (NLSS…QVEQ) and 286-295 (NPVSATTVQS). Residues 254–362 (NLSSNDSFAS…GEAAVREEEP (109 aa)) form a disordered region. Composition is skewed to basic and acidic residues over residues 322–334 (PGHE…REDL) and 351–361 (HEGEAAVREEE). Positions 417 to 496 (ALEVTTRNRT…NEVVKVGTLV (80 aa)) constitute a G5 domain. Residue His1502 participates in Zn(2+) binding. Residue Glu1503 is part of the active site. The Zn(2+) site is built by His1506 and Glu1526.

It belongs to the peptidase M26 family. Zn(2+) is required as a cofactor. The Gram-positive cell-wall anchor motif LPXTG is located in the N-terminal part, in contrast to such motifs in other known streptococcal and staphylococcal proteins. The protease could be cleaved by the sortase and anchored in the membrane via the two potential N-terminal transmembrane domains, whereas the propeptide located prior to the LPXTG motif would remain attached to the cell wall peptidoglycan by an amide bond.

The protein localises to the secreted. Its subcellular location is the cell wall. The protein resides in the membrane. Zinc metalloproteinase that specifically cleaves human matrix metalloproteinase 9 (MMP-9), leading to its activation. May play a role in pneumococcal virulence and pathogenicity in the lung. This is Zinc metalloprotease ZmpC (zmpC) from Streptococcus pneumoniae serotype 4 (strain ATCC BAA-334 / TIGR4).